The primary structure comprises 397 residues: Tryptophan synthase beta chain (397 aa).

Lys-87 bears the N6-(pyridoxal phosphate)lysine mark.

Belongs to the TrpB family. As to quaternary structure, tetramer of two alpha and two beta chains. Requires pyridoxal 5'-phosphate as cofactor.

The enzyme catalyses (1S,2R)-1-C-(indol-3-yl)glycerol 3-phosphate + L-serine = D-glyceraldehyde 3-phosphate + L-tryptophan + H2O. Its pathway is amino-acid biosynthesis; L-tryptophan biosynthesis; L-tryptophan from chorismate: step 5/5. Its function is as follows. The beta subunit is responsible for the synthesis of L-tryptophan from indole and L-serine. In Salmonella agona (strain SL483), this protein is Tryptophan synthase beta chain.